The sequence spans 165 residues: Destrin (165 aa).

Position 2 is an N-acetylalanine (alanine 2). The residue at position 3 (serine 3) is a Phosphoserine. The ADF-H domain maps to 4–153; it reads GVQVADEVCR…NRACIAEKLG (150 aa). Lysine 19 carries the post-translational modification N6-acetyllysine. The Nuclear localization signal signature appears at 30-34; that stretch reads KKRKK.

Belongs to the actin-binding proteins ADF family. In terms of processing, ISGylated.

In terms of biological role, actin-depolymerizing protein. Severs actin filaments (F-actin) and binds to actin monomers (G-actin). Acts in a pH-independent manner. This is Destrin (DSTN) from Bos taurus (Bovine).